A 324-amino-acid chain; its full sequence is tRNA dimethylallyltransferase (324 aa).

Position 18–25 (glycine 18–threonine 25) interacts with ATP. Threonine 20–threonine 25 provides a ligand contact to substrate. Residues aspartate 43–glutamine 46 form an interaction with substrate tRNA region.

Belongs to the IPP transferase family. In terms of assembly, monomer. Requires Mg(2+) as cofactor.

The enzyme catalyses adenosine(37) in tRNA + dimethylallyl diphosphate = N(6)-dimethylallyladenosine(37) in tRNA + diphosphate. Functionally, catalyzes the transfer of a dimethylallyl group onto the adenine at position 37 in tRNAs that read codons beginning with uridine, leading to the formation of N6-(dimethylallyl)adenosine (i(6)A). This chain is tRNA dimethylallyltransferase, found in Salinibacter ruber (strain DSM 13855 / M31).